The sequence spans 430 residues: Enolase (430 aa).

Glutamine 167 provides a ligand contact to (2R)-2-phosphoglycerate. Residue glutamate 209 is the Proton donor of the active site. Mg(2+) contacts are provided by aspartate 246, glutamate 287, and aspartate 314. (2R)-2-phosphoglycerate contacts are provided by lysine 339, arginine 368, serine 369, and lysine 390. Catalysis depends on lysine 339, which acts as the Proton acceptor.

The protein belongs to the enolase family. It depends on Mg(2+) as a cofactor.

It is found in the cytoplasm. The protein localises to the secreted. It localises to the cell surface. It catalyses the reaction (2R)-2-phosphoglycerate = phosphoenolpyruvate + H2O. It participates in carbohydrate degradation; glycolysis; pyruvate from D-glyceraldehyde 3-phosphate: step 4/5. Its function is as follows. Catalyzes the reversible conversion of 2-phosphoglycerate (2-PG) into phosphoenolpyruvate (PEP). It is essential for the degradation of carbohydrates via glycolysis. In Prochlorococcus marinus subsp. pastoris (strain CCMP1986 / NIES-2087 / MED4), this protein is Enolase.